The primary structure comprises 355 residues: UDP-N-acetylglucosamine--N-acetylmuramyl-(pentapeptide) pyrophosphoryl-undecaprenol N-acetylglucosamine transferase (355 aa).

Residues Thr15–Gly17, Asn127, Arg163, Ser191, Ile244, Ala263–Glu268, and Gln288 each bind UDP-N-acetyl-alpha-D-glucosamine.

This sequence belongs to the glycosyltransferase 28 family. MurG subfamily.

The protein localises to the cell inner membrane. It catalyses the reaction di-trans,octa-cis-undecaprenyl diphospho-N-acetyl-alpha-D-muramoyl-L-alanyl-D-glutamyl-meso-2,6-diaminopimeloyl-D-alanyl-D-alanine + UDP-N-acetyl-alpha-D-glucosamine = di-trans,octa-cis-undecaprenyl diphospho-[N-acetyl-alpha-D-glucosaminyl-(1-&gt;4)]-N-acetyl-alpha-D-muramoyl-L-alanyl-D-glutamyl-meso-2,6-diaminopimeloyl-D-alanyl-D-alanine + UDP + H(+). It participates in cell wall biogenesis; peptidoglycan biosynthesis. Cell wall formation. Catalyzes the transfer of a GlcNAc subunit on undecaprenyl-pyrophosphoryl-MurNAc-pentapeptide (lipid intermediate I) to form undecaprenyl-pyrophosphoryl-MurNAc-(pentapeptide)GlcNAc (lipid intermediate II). The polypeptide is UDP-N-acetylglucosamine--N-acetylmuramyl-(pentapeptide) pyrophosphoryl-undecaprenol N-acetylglucosamine transferase (Escherichia coli O45:K1 (strain S88 / ExPEC)).